Consider the following 436-residue polypeptide: T-box transcription factor T (436 aa).

The T-box DNA-binding region spans 51-219; that stretch reads LWLRFKELTN…YNPFAKAFLD (169 aa).

In terms of assembly, monomer. Binds DNA as a monomer.

It localises to the nucleus. Involved in the transcriptional regulation of genes required for mesoderm formation and differentiation. Binds to a palindromic T site 5'-TTCACACCTAGGTGTGAA-3' DNA sequence and activates gene transcription when bound to such a site. The sequence is that of T-box transcription factor T from Mus musculus (Mouse).